Reading from the N-terminus, the 341-residue chain is tRNA N6-adenosine threonylcarbamoyltransferase (341 aa).

Fe cation-binding residues include His-111 and His-115. Substrate contacts are provided by residues 134 to 138 (LVSGG), Asp-167, Gly-180, and Asn-276. Residue Asp-304 coordinates Fe cation.

It belongs to the KAE1 / TsaD family. Requires Fe(2+) as cofactor.

Its subcellular location is the cytoplasm. The enzyme catalyses L-threonylcarbamoyladenylate + adenosine(37) in tRNA = N(6)-L-threonylcarbamoyladenosine(37) in tRNA + AMP + H(+). In terms of biological role, required for the formation of a threonylcarbamoyl group on adenosine at position 37 (t(6)A37) in tRNAs that read codons beginning with adenine. Is involved in the transfer of the threonylcarbamoyl moiety of threonylcarbamoyl-AMP (TC-AMP) to the N6 group of A37, together with TsaE and TsaB. TsaD likely plays a direct catalytic role in this reaction. The polypeptide is tRNA N6-adenosine threonylcarbamoyltransferase (Pseudomonas aeruginosa (strain ATCC 15692 / DSM 22644 / CIP 104116 / JCM 14847 / LMG 12228 / 1C / PRS 101 / PAO1)).